The sequence spans 88 residues: MAKSLAVALRATGGARVMRRAGREREGCSDTRCRCQRWRRRLQGFGLAAAGGNRYRNKHHYRPAGGDPWDPCYRPMIISTSCAGATRS.

The chain is Cold-regulated protein BLT14 (BLT14) from Hordeum vulgare (Barley).